The chain runs to 358 residues: Ubiquitin thioesterase OTU1 (358 aa).

Residues 5-87 (FSVKLKSKKG…LIVEEKAGAA (83 aa)) enclose the Ubiquitin-like domain. Positions 8–94 (KLKSKKGQFI…GAAGPTSTPL (87 aa)) are UBX-like. The disordered stretch occupies residues 83–108 (KAGAAGPTSTPLASGSGSSTMEDDEA). Residues 89-102 (PTSTPLASGSGSST) are compositionally biased toward polar residues. The region spanning 161–285 (LLKKVVPADN…GIHYDPLYME (125 aa)) is the OTU domain. The cys-loop stretch occupies residues 166–172 (VPADNSC). The active site involves D169. C172 acts as the Nucleophile in catalysis. The interval 224–234 (IQKADSWGGAI) is variable-loop. A his-loop region spans residues 274–278 (FDGIH). Position 277 (I277) interacts with substrate. H278 is a catalytic residue. Residues 301–306 (MGVYQQ) are S2 site. The C2H2-type zinc finger occupies 328 to 352 (LRCMDCDVMLVGQGQAQEHAKKTGH). H352 is a catalytic residue.

The catalysed reaction is Thiol-dependent hydrolysis of ester, thioester, amide, peptide and isopeptide bonds formed by the C-terminal Gly of ubiquitin (a 76-residue protein attached to proteins as an intracellular targeting signal).. Hydrolase that can remove conjugated ubiquitin from proteins and may therefore play an important regulatory role at the level of protein turnover by preventing degradation. This is Ubiquitin thioesterase OTU1 from Drosophila pseudoobscura pseudoobscura (Fruit fly).